A 745-amino-acid chain; its full sequence is 1,4-alpha-glucan branching enzyme GlgB (745 aa).

D416 acts as the Nucleophile in catalysis. The Proton donor role is filled by E469.

Belongs to the glycosyl hydrolase 13 family. GlgB subfamily. In terms of assembly, monomer.

The enzyme catalyses Transfers a segment of a (1-&gt;4)-alpha-D-glucan chain to a primary hydroxy group in a similar glucan chain.. Its pathway is glycan biosynthesis; glycogen biosynthesis. In terms of biological role, catalyzes the formation of the alpha-1,6-glucosidic linkages in glycogen by scission of a 1,4-alpha-linked oligosaccharide from growing alpha-1,4-glucan chains and the subsequent attachment of the oligosaccharide to the alpha-1,6 position. This Shewanella sp. (strain W3-18-1) protein is 1,4-alpha-glucan branching enzyme GlgB.